The sequence spans 778 residues: Arf-GAP with coiled-coil, ANK repeat and PH domain-containing protein 2 (778 aa).

In terms of domain architecture, BAR spans 1 to 226 (MKMTVDFEEC…MKDLGAQLDR (226 aa)). The PH domain occupies 266 to 361 (GIVMEGYLFK…WIKAVQTSIA (96 aa)). Positions 371-391 (SEKLDKKSSPSTGSLDSGNES) are disordered. A compositionally biased stretch (polar residues) spans 379–388 (SPSTGSLDSG). Phosphoserine is present on residues Ser384 and Ser387. The Arf-GAP domain maps to 399 to 520 (ESALQRVQCV…KFVDKYSVSS (122 aa)). The C4-type zinc-finger motif lies at 414-437 (CCDCGLADPRWASINLGITLCIEC). A disordered region spans residues 518–596 (VSSSPPEQEK…EPEGERQDSS (79 aa)). Ser521 bears the Phosphoserine mark. Residues 524–539 (EQEKKVVSKDSEEKRL) show a composition bias toward basic and acidic residues. Residues 550-569 (VRTSIQSSVKSNDSGIQQSS) are compositionally biased toward polar residues. Ser581 and Ser584 each carry phosphoserine. ANK repeat units lie at residues 640–669 (NKAT…NVNQ), 673–702 (QGRG…NQHA), and 706–735 (EGKD…NEEM). Tyr742 carries the phosphotyrosine modification. The residue at position 775 (Ser775) is a Phosphoserine.

Interacts with RAB35 (GTP-bound form); the interaction is direct and probably recruits ACAP2 to membranes. Interacts with MICALL1; the interaction is indirect through RAB35.

The protein localises to the endosome membrane. It is found in the cell membrane. GAP activity stimulated by phosphatidylinositol 4,5-bisphosphate (PIP2) and phosphatidic acid. GTPase-activating protein (GAP) for ADP ribosylation factor 6 (ARF6). Doesn't show GAP activity for RAB35. The polypeptide is Arf-GAP with coiled-coil, ANK repeat and PH domain-containing protein 2 (ACAP2) (Oryctolagus cuniculus (Rabbit)).